We begin with the raw amino-acid sequence, 129 residues long: Small ribosomal subunit protein uS11 (129 aa).

Belongs to the universal ribosomal protein uS11 family. Part of the 30S ribosomal subunit. Interacts with proteins S7 and S18. Binds to IF-3.

Functionally, located on the platform of the 30S subunit, it bridges several disparate RNA helices of the 16S rRNA. Forms part of the Shine-Dalgarno cleft in the 70S ribosome. The sequence is that of Small ribosomal subunit protein uS11 from Lawsonia intracellularis (strain PHE/MN1-00).